The sequence spans 819 residues: Advillin (819 aa).

Positions 1–731 (MSLSSAFRTV…YEQLKNELGD (731 aa)) are core. Residues 24–105 (MELVLVPLSA…VQYHESDTFR (82 aa)) form a Gelsolin-like 1 repeat. The residue at position 85 (Y85) is a Phosphotyrosine. A 1,2-diacyl-sn-glycero-3-phospho-(1D-myo-inositol-4,5-bisphosphate) is bound by residues 109-116 (KRGIIYKK) and 135-143 (RLLHVKGKR). 5 Gelsolin-like repeats span residues 144–215 (NIRA…KEAA), 265–339 (TEVA…SAMF), 407–486 (LVPV…RHFM), 524–592 (NTKA…PEFW), and 631–704 (TEVT…PPTF). Residues 628 to 819 (FLVTEVTDFT…LQLKKEAGLF (192 aa)) are required for interaction with F-actin. The interval 731 to 819 (DATAIVRITT…LQLKKEAGLF (89 aa)) is headpiece. Residues 753-819 (ESGPKYYPVE…LQLKKEAGLF (67 aa)) enclose the HP domain. At Y758 the chain carries Phosphotyrosine.

The protein belongs to the villin/gelsolin family. Associates (via C-terminus) with actin. Interacts with F-actin. Interacts with SCARF1; the interaction occurs in embryonic dorsal root ganglions at 18 dpc and induces neurite-like outgrowth. Interacts with PLCE1. Interacts with ACTR2 and ACTR3; associates with the ARP2/3 complex. In terms of tissue distribution, expressed in dorsal root ganglion (DRG) neurons and superior cervical ganglia (SCG). Expressed in podocytes.

The protein resides in the cytoplasm. It localises to the cytoskeleton. Its subcellular location is the cell projection. The protein localises to the neuron projection. It is found in the axon. The protein resides in the lamellipodium. It localises to the cell junction. Its subcellular location is the focal adhesion. Its function is as follows. Ca(2+)-regulated actin-binding protein which plays an important role in actin bundling. May have a unique function in the morphogenesis of neuronal cells which form ganglia. Required for SREC1-mediated regulation of neurite-like outgrowth. Plays a role in regenerative sensory axon outgrowth and remodeling processes after peripheral injury in neonates. Involved in the formation of long fine actin-containing filopodia-like structures in fibroblast. Plays a role in ciliogenesis. In podocytes, controls lamellipodia formation through the regulation of EGF-induced diacylglycerol generation by PLCE1 and ARP2/3 complex assembly. This is Advillin from Rattus norvegicus (Rat).